We begin with the raw amino-acid sequence, 268 residues long: MNGTANPLLDREEHCLRLGESFEKRPRASFHTIRYDFKPASIDTSCEGELQVGKGDEVTITLPHIPGSTPPMTVFKGNKRPYQKDCVLIINHDTGEYVLEKLSSSIQVKKTRAEGSSKIQARMEQQPARPPQPSQPPPPPPPMPFRAPTKPPAGPKTSPLKDNPSPEPQLDDIKRELRAEVDIIEQMSSSSGSSSSDSESSSGSDDDSSSSAGEDNGPASPPQPSHQQPYNSRPAVANGTSRPQGSSQLMNTLRNDLQLSESGSDSDD.

Positions 106–268 (IQVKKTRAEG…LSESGSDSDD (163 aa)) are disordered. A compositionally biased stretch (pro residues) spans 128–154 (ARPPQPSQPPPPPPPMPFRAPTKPPAG). S165 is modified (phosphoserine). Residues 171–181 (DDIKRELRAEV) show a composition bias toward basic and acidic residues. The segment at 182-262 (DIIEQMSSSS…LRNDLQLSES (81 aa)) is necessary for transactivation activity. Over residues 188 to 203 (SSSSGSSSSDSESSSG) the composition is skewed to low complexity. Polar residues predominate over residues 238-268 (NGTSRPQGSSQLMNTLRNDLQLSESGSDSDD).

The protein belongs to the EAF family. In terms of assembly, component of the super elongation complex (SEC), at least composed of EAF1, EAF2, CDK9, MLLT3/AF9, AFF (AFF1 or AFF4), the P-TEFb complex and ELL (ELL, ELL2 or ELL3). Interacts with ELL and ELL2.

It localises to the nucleus speckle. It is found in the nucleus. Its subcellular location is the cajal body. Functionally, acts as a transcriptional transactivator of ELL and ELL2 elongation activities. In Mus musculus (Mouse), this protein is ELL-associated factor 1 (Eaf1).